A 153-amino-acid polypeptide reads, in one-letter code: Superoxide dismutase [Cu-Zn] (153 aa).

Residues histidine 45 and histidine 47 each contribute to the Cu cation site. Threonine 53 carries the post-translational modification Phosphothreonine. Cysteine 56 and cysteine 145 are disulfide-bonded. At serine 59 the chain carries Phosphoserine. Histidine 62 is a Cu cation binding site. Zn(2+)-binding residues include histidine 62, histidine 70, histidine 79, and aspartate 82. Histidine 119 contacts Cu cation.

Belongs to the Cu-Zn superoxide dismutase family. As to quaternary structure, homodimer. Cu cation is required as a cofactor. The cofactor is Zn(2+).

It localises to the cytoplasm. It catalyses the reaction 2 superoxide + 2 H(+) = H2O2 + O2. Destroys radicals which are normally produced within the cells and which are toxic to biological systems. The chain is Superoxide dismutase [Cu-Zn] from Drosophila melanogaster (Fruit fly).